A 206-amino-acid polypeptide reads, in one-letter code: Anti-sigma-W factor RsiW (206 aa).

The Cytoplasmic segment spans residues 1–87 (MSCPEHIVQL…ASINRWLKAH (87 aa)). Zn(2+) is bound by residues His30, Cys34, and Cys37. Residues 88 to 108 (PFLVAAALFAILMGGSFFSSW) traverse the membrane as a helical segment. Over 109–206 (KNDHDFSVSS…SVFGVKESKE (98 aa)) the chain is Extracellular.

It belongs to the zinc-associated anti-sigma factor (ZAS) superfamily. Anti-sigma-W factor family. Zn(2+) is required as a cofactor. In terms of processing, is processed by three successive proteolytic events. First, the extracellular region of RsiW is cleaved by PrsW (Site-1 cleavage) in response to cell envelope stresses. Next, it undergoes cleavage at an intramembrane site (Site-2 cleavage) mediated by RasP. This cleavage uncovers a cryptic proteolytic tag with conserved alanine residues in the transmembrane segment, that is recognized mainly by the ClpXP protease, which completely degrades the protein in the cytoplasm and leads to the induction of the sigma-W-controlled genes.

It localises to the membrane. Functionally, is the anti-sigma factor for SigW. The presence of RsiW leads to the inactivation of SigW, and its proteolytic destruction to sigma-W activation. This is Anti-sigma-W factor RsiW (rsiW) from Bacillus licheniformis (strain ATCC 14580 / DSM 13 / JCM 2505 / CCUG 7422 / NBRC 12200 / NCIMB 9375 / NCTC 10341 / NRRL NRS-1264 / Gibson 46).